We begin with the raw amino-acid sequence, 272 residues long: MMNPFLPEGCDPPPPPQPMEGLHENAPPPFLTKTFEMVDDPNTDHIVSWNRGGTSFVVWDLHSFSTILLPRHFKHSNFSSFIRQLNTYGFRKIEAERWEFANEEFLLGQRQLLKNIKRRNPFTPSSSPSHDACNELRREKQVLMMEIVSLRQQQQTTKSYIKAMEQRIEGTERKQRQMMSFLARAMQSPSFLHQLLKQRDKKIKELEDNESAKRKRGSSSMSELEVLALEMQGHGKQRNMLEEEDHQLVVERELDDGFWEELLSDESLASTS.

The tract at residues 1-26 (MMNPFLPEGCDPPPPPQPMEGLHENA) is disordered. The DNA-binding element occupies 27-121 (PPPFLTKTFE…LLKNIKRRNP (95 aa)). Residues 132-186 (ACNELRREKQVLMMEIVSLRQQQQTTKSYIKAMEQRIEGTERKQRQMMSFLARAM) form a hydrophobic repeat HR-A/B region. Residues 201–216 (KKIKELEDNESAKRKR) carry the Bipartite nuclear localization signal motif. Residues 203–212 (IKELEDNESA) show a composition bias toward basic and acidic residues. Residues 203–223 (IKELEDNESAKRKRGSSSMSE) form a disordered region. Positions 256-265 (DGFWEELLSD) match the AHA motif.

Belongs to the HSF family. Class A subfamily. Homotrimer. In terms of processing, exhibits temperature-dependent phosphorylation.

The protein resides in the nucleus. Its function is as follows. Transcriptional activator that specifically binds DNA sequence 5'-AGAAnnTTCT-3' known as heat shock promoter elements (HSE). This Arabidopsis thaliana (Mouse-ear cress) protein is Heat stress transcription factor A-7a (HSFA7A).